The primary structure comprises 174 residues: ATP-dependent protease subunit HslV (174 aa).

Thr2 is a catalytic residue. Positions 157, 160, and 163 each coordinate Na(+).

Belongs to the peptidase T1B family. HslV subfamily. As to quaternary structure, a double ring-shaped homohexamer of HslV is capped on each side by a ring-shaped HslU homohexamer. The assembly of the HslU/HslV complex is dependent on binding of ATP.

The protein localises to the cytoplasm. It catalyses the reaction ATP-dependent cleavage of peptide bonds with broad specificity.. Its activity is regulated as follows. Allosterically activated by HslU binding. In terms of biological role, protease subunit of a proteasome-like degradation complex believed to be a general protein degrading machinery. The polypeptide is ATP-dependent protease subunit HslV (Shewanella baltica (strain OS195)).